The chain runs to 951 residues: Multiple C2 and transmembrane domain-containing protein 1 (951 aa).

4 disordered regions span residues 29–79 (LGVG…RWSG), 92–117 (SSSQPNLCCSSPEPLEPGGAGRAEQG), 129–198 (LPVA…QKSS), and 210–231 (LEPAPPPAEPARGPAEPQALQK). Positions 31-43 (VGKGKGGGGGRAG) are enriched in gly residues. Over residues 147 to 168 (PGGRSPDSAPSSSSASSSLSSS) the composition is skewed to low complexity. The span at 174-184 (RGDRVRDESTR) shows a compositional bias: basic and acidic residues. Residues 219–228 (PARGPAEPQA) are compositionally biased toward low complexity. 3 C2 domains span residues 240-358 (KIST…DVTL), 404-521 (QTQS…KLEL), and 555-676 (QKER…AYVL). Ca(2+)-binding residues include D275, D281, D328, D330, D336, D438, D444, D491, D493, D499, D594, D600, D646, D648, and D654. A run of 2 helical transmembrane segments spans residues 763-783 (FVLFLLIVWNFELYMIPLLLL) and 866-886 (PFLSWLAIVALCVFTAILYFI).

This sequence belongs to the MCTP family. Requires Ca(2+) as cofactor.

It is found in the cytoplasmic vesicle. It localises to the secretory vesicle. Its subcellular location is the synaptic vesicle membrane. The protein localises to the recycling endosome. The protein resides in the endoplasmic reticulum membrane. Functionally, calcium sensor which is essential for the stabilization of normal baseline neurotransmitter release and for the induction and long-term maintenance of presynaptic homeostatic plasticity. The chain is Multiple C2 and transmembrane domain-containing protein 1 from Mus musculus (Mouse).